A 484-amino-acid chain; its full sequence is ATP synthase subunit beta (484 aa).

168-175 (GGAGVGKT) is a binding site for ATP.

The protein belongs to the ATPase alpha/beta chains family. As to quaternary structure, F-type ATPases have 2 components, CF(1) - the catalytic core - and CF(0) - the membrane proton channel. CF(1) has five subunits: alpha(3), beta(3), gamma(1), delta(1), epsilon(1). CF(0) has three main subunits: a(1), b(2) and c(9-12). The alpha and beta chains form an alternating ring which encloses part of the gamma chain. CF(1) is attached to CF(0) by a central stalk formed by the gamma and epsilon chains, while a peripheral stalk is formed by the delta and b chains.

The protein resides in the cell membrane. The enzyme catalyses ATP + H2O + 4 H(+)(in) = ADP + phosphate + 5 H(+)(out). Its function is as follows. Produces ATP from ADP in the presence of a proton gradient across the membrane. The catalytic sites are hosted primarily by the beta subunits. The chain is ATP synthase subunit beta from Arthrobacter sp. (strain FB24).